Consider the following 455-residue polypeptide: Protein king tubby (455 aa).

The tract at residues 35–92 (RPMSGMRGNSRELHAYDGPMQFIGSPHNPDQILSNNSSSVHLSSSMNSSRNNSNNLRS) is disordered. A compositionally biased stretch (low complexity) spans 67 to 92 (LSNNSSSVHLSSSMNSSRNNSNNLRS). Ser-144 is subject to Phosphoserine.

It belongs to the TUB family.

It is found in the cytoplasm. The protein localises to the nucleus. It localises to the cell projection. The protein resides in the cilium membrane. Its subcellular location is the rhabdomere. The polypeptide is Protein king tubby (Drosophila virilis (Fruit fly)).